Reading from the N-terminus, the 272-residue chain is tRNA pseudouridine synthase B (272 aa).

Asp-38 (nucleophile) is an active-site residue.

The protein belongs to the pseudouridine synthase TruB family. Type 1 subfamily.

It catalyses the reaction uridine(55) in tRNA = pseudouridine(55) in tRNA. Its function is as follows. Responsible for synthesis of pseudouridine from uracil-55 in the psi GC loop of transfer RNAs. The sequence is that of tRNA pseudouridine synthase B from Campylobacter jejuni subsp. jejuni serotype O:2 (strain ATCC 700819 / NCTC 11168).